The primary structure comprises 129 residues: MERYTKKNERFKAEEGKGSKKSRTFLTERERRALFNDRFFDLKNLIPNPTKGGEASIVQDGIVYINELQRLVSELKYLVEKKKCGARHNNIEVDNKNTIYGTSKIEHPFSKNKNTFNCLIRTLRFVHHF.

A compositionally biased stretch (basic and acidic residues) spans 1 to 18 (MERYTKKNERFKAEEGKG). Positions 1–24 (MERYTKKNERFKAEEGKGSKKSRT) are disordered. The bHLH domain maps to 19–68 (SKKSRTFLTERERRALFNDRFFDLKNLIPNPTKGGEASIVQDGIVYINEL).

Belongs to the bHLH protein family.

The protein localises to the nucleus. This Arabidopsis thaliana (Mouse-ear cress) protein is Transcription factor bHLH138.